Reading from the N-terminus, the 382-residue chain is Na(+)/H(+) antiporter NhaA 2 (382 aa).

10 consecutive transmembrane segments (helical) span residues 11-31, 45-65, 91-111, 116-136, 145-165, 171-191, 197-214, 287-307, 324-344, and 353-373; these read FSVP…LDPA, LSFH…IAAV, LGGV…VGLP, GWGI…RMVF, YLLL…ALFY, PVVA…WGLG, SYWP…IGLH, WLVL…FGLL, LLVA…VSGS, and AAAK…MLLG.

This sequence belongs to the NhaA Na(+)/H(+) (TC 2.A.33) antiporter family.

The protein localises to the cell inner membrane. The catalysed reaction is Na(+)(in) + 2 H(+)(out) = Na(+)(out) + 2 H(+)(in). Functionally, na(+)/H(+) antiporter that extrudes sodium in exchange for external protons. This Pelobacter propionicus (strain DSM 2379 / NBRC 103807 / OttBd1) protein is Na(+)/H(+) antiporter NhaA 2.